A 161-amino-acid polypeptide reads, in one-letter code: Glycine-rich RNA-binding protein blt801 (161 aa).

The region spanning 6 to 84 (YRCFVGGLRW…RNITVNEAQS (79 aa)) is the RRM domain. The segment at 72 to 161 (LDGRNITVNE…GGSGGGNWRE (90 aa)) is disordered. Ser87 carries the phosphoserine; by PKA modification. Gly residues predominate over residues 89 to 161 (GGGGFGGGGG…GGSGGGNWRE (73 aa)).

In terms of biological role, binds single-stranded DNA and homoribopolymers of guanine, uracil and adenine, but not cytosine. Also binds RNA, with a preference for RNA containing a high proportion of adenine within an open loop structure. Possibly has a role in RNA transcription or processing during stress. This is Glycine-rich RNA-binding protein blt801 from Hordeum vulgare (Barley).